A 214-amino-acid chain; its full sequence is Octanoyltransferase (214 aa).

The 186-residue stretch at 29–214 folds into the BPL/LPL catalytic domain; the sequence is STTPDEIWIL…EHLQKQLMPT (186 aa). Residues 69–76, 146–148, and 159–161 each bind substrate; these read RGGEITYH, ALG, and GLA. Cysteine 177 functions as the Acyl-thioester intermediate in the catalytic mechanism.

The protein belongs to the LipB family.

It localises to the cytoplasm. The catalysed reaction is octanoyl-[ACP] + L-lysyl-[protein] = N(6)-octanoyl-L-lysyl-[protein] + holo-[ACP] + H(+). It participates in protein modification; protein lipoylation via endogenous pathway; protein N(6)-(lipoyl)lysine from octanoyl-[acyl-carrier-protein]: step 1/2. Functionally, catalyzes the transfer of endogenously produced octanoic acid from octanoyl-acyl-carrier-protein onto the lipoyl domains of lipoate-dependent enzymes. Lipoyl-ACP can also act as a substrate although octanoyl-ACP is likely to be the physiological substrate. This chain is Octanoyltransferase, found in Polynucleobacter asymbioticus (strain DSM 18221 / CIP 109841 / QLW-P1DMWA-1) (Polynucleobacter necessarius subsp. asymbioticus).